The following is a 27-amino-acid chain: Nemertide alpha-8 (27 aa).

Intrachain disulfides connect Cys2/Cys16, Cys9/Cys20, and Cys15/Cys26.

This sequence belongs to the nemertide family. Confined to the epidermis and to the mucus layer.

Its subcellular location is the secreted. Functionally, highly potent toxin against both insect and some mammalian sodium channels (Nav). It potently inhibits inactivation of insect sodium channels of B.germanica (BgNav1) and also delays the inactivation of mammalian Nav with potent activity on Nav1.3/SCN3A and Nav1.4/SCN4A. 1 uM is enough to completely inhibits the inactivation, resulting in sustained non-inactivating currents. In addition, the toxin significantly enhances the recovery from inactivation, and the open state is not required for the toxin to interact with the channel. In vivo, injection into brine shrimp (Artemia salina) stops movement or causes death after 24 hours (EC(50)=0.4 uM). This is Nemertide alpha-8 from Riseriellus occultus (Ribbon worm).